Reading from the N-terminus, the 34-residue chain is Conotoxin de13a (34 aa).

Residues Pro3 and Pro7 each carry the 4-hydroxyproline modification. At Trp14 the chain carries 6'-bromotryptophan. Position 18 is a 5-hydroxylysine (Lys18). A 4-hydroxyproline modification is found at Pro21. Lys25 carries the post-translational modification 5-hydroxylysine. His32 is modified (histidine amide).

In terms of processing, contains 4 disulfide bonds. The diastereomeric form of 5-hydroxylysine found was not conclusively established, but it is probably 5R. Expressed by the venom duct.

It is found in the secreted. The chain is Conotoxin de13a from Conasprella delessertii (Sozon's cone).